The following is a 129-amino-acid chain: Small ribosomal subunit protein uS11 (129 aa).

Belongs to the universal ribosomal protein uS11 family. Part of the 30S ribosomal subunit. Interacts with proteins S7 and S18. Binds to IF-3.

Located on the platform of the 30S subunit, it bridges several disparate RNA helices of the 16S rRNA. Forms part of the Shine-Dalgarno cleft in the 70S ribosome. This chain is Small ribosomal subunit protein uS11, found in Pseudomonas entomophila (strain L48).